The following is a 252-amino-acid chain: ATP-dependent L-serine kinase (252 aa).

Residue Glu35 is part of the active site. Position 73 (Val73) interacts with O-phospho-L-serine. A Mg(2+)-binding site is contributed by Asp74. O-phospho-L-serine is bound by residues Gly75, His76, His77, Trp107, Lys231, Thr233, and His235.

The protein belongs to the SerK family. As to quaternary structure, monomer. Mg(2+) serves as cofactor.

It carries out the reaction L-serine + ATP = O-phospho-L-serine + ADP + H(+). Functionally, free serine kinase that uses ATP to phosphorylate L-serine to yield O-phospho-L-serine and ADP. Can use ATP, UTP, CTP, GTP and the inorganic polyphosphates triphosphate and tetraphosphate as phosphate donors, with a preference for nucleoside 5'-triphosphates, but cannot use ADP. The catalytic efficiency is highest for ATP. Is specific for L-serine and cannot phosphorylate structurally similar compounds such as D-serine, L-threonine, L-homoserine, hydroxypyruvate, 3-hydroxypropionate and DL-glycerate. Likely contributes to serine metabolism, including cysteine biosynthesis. The polypeptide is ATP-dependent L-serine kinase (Staphylothermus marinus (strain ATCC 43588 / DSM 3639 / JCM 9404 / F1)).